The sequence spans 130 residues: Small ribosomal subunit protein uS8 (130 aa).

It belongs to the universal ribosomal protein uS8 family. As to quaternary structure, part of the 30S ribosomal subunit. Contacts proteins S5 and S12.

Functionally, one of the primary rRNA binding proteins, it binds directly to 16S rRNA central domain where it helps coordinate assembly of the platform of the 30S subunit. The protein is Small ribosomal subunit protein uS8 of Vibrio parahaemolyticus serotype O3:K6 (strain RIMD 2210633).